Consider the following 296-residue polypeptide: Co-chaperone protein DjlA (296 aa).

At 1–15 (MNLRDFFVITTWWGK) the chain is on the periplasmic side. Residues 16–39 (ILGAFFGYLTAGPVGALFGILVGN) traverse the membrane as a helical segment. Residues 40–296 (FFDRGLVSYY…YELICETKGW (257 aa)) are Cytoplasmic-facing. The tract at residues 200 to 225 (QHYHNQQEYKHTSSSQGQQGYKPQSP) is disordered. Positions 211–221 (TSSSQGQQGYK) are enriched in polar residues. Positions 231–296 (HAFALLEVSP…YELICETKGW (66 aa)) constitute a J domain.

Homodimer.

The protein resides in the cell inner membrane. Functionally, regulatory DnaK co-chaperone. Direct interaction between DnaK and DjlA is needed for the induction of the wcaABCDE operon, involved in the synthesis of a colanic acid polysaccharide capsule, possibly through activation of the RcsB/RcsC phosphotransfer signaling pathway. The colanic acid capsule may help the bacterium survive conditions outside the host. In Legionella pneumophila subsp. pneumophila (strain Philadelphia 1 / ATCC 33152 / DSM 7513), this protein is Co-chaperone protein DjlA.